We begin with the raw amino-acid sequence, 244 residues long: 1-(5-phosphoribosyl)-5-[(5-phosphoribosylamino)methylideneamino] imidazole-4-carboxamide isomerase (244 aa).

The active-site Proton acceptor is Asp-7. Asp-129 (proton donor) is an active-site residue.

This sequence belongs to the HisA/HisF family.

It localises to the cytoplasm. The enzyme catalyses 1-(5-phospho-beta-D-ribosyl)-5-[(5-phospho-beta-D-ribosylamino)methylideneamino]imidazole-4-carboxamide = 5-[(5-phospho-1-deoxy-D-ribulos-1-ylimino)methylamino]-1-(5-phospho-beta-D-ribosyl)imidazole-4-carboxamide. It participates in amino-acid biosynthesis; L-histidine biosynthesis; L-histidine from 5-phospho-alpha-D-ribose 1-diphosphate: step 4/9. This chain is 1-(5-phosphoribosyl)-5-[(5-phosphoribosylamino)methylideneamino] imidazole-4-carboxamide isomerase, found in Pseudoalteromonas atlantica (strain T6c / ATCC BAA-1087).